The chain runs to 316 residues: Lys-63-specific deubiquitinase BRCC36 (316 aa).

Position 2 is an N-acetylalanine (alanine 2). The region spanning 12–179 (VHLESDAFLV…YTCFQSIQAQ (168 aa)) is the MPN domain. Positions 122, 124, and 135 each coordinate Zn(2+). The JAMM motif motif lies at 122–135 (HSHPHITVWPSHVD). Position 258 is a phosphoserine (serine 258).

This sequence belongs to the peptidase M67A family. BRCC36 subfamily. In terms of assembly, component of the ARISC complex, at least composed of UIMC1/RAP80, ABRAXAS1, BRCC3/BRCC36, BABAM2 and BABAM1/NBA1. Component of the BRCA1-A complex, at least composed of BRCA1, BARD1, UIMC1/RAP80, ABRAXAS1, BRCC3/BRCC36, BABAM2 and BABAM1/NBA1. In the BRCA1-A complex, interacts directly with ABRAXAS1 and BABAM2. Component of the BRISC complex, at least composed of ABRAXAS2, BRCC3/BRCC36, BABAM2 and BABAM1/NBA1. Identified in a complex with SHMT2 and the other subunits of the BRISC complex. In the BRISC complex, interacts directly with ABRAXAS2. Identified in a complex with ABRAXAS2 and NUMA1. The BRISC complex interacts with the CSN complex. Component of the BRCA1/BRCA2 containing complex (BRCC), which also contains BRCA1, BRCA2, BARD1, BABAM2 and RAD51. BRCC is a ubiquitin E3 ligase complex that enhances cellular survival following DNA damage. Interacts with BRCA1. Binds polyubiquitin. Interacts with PWWP2B. Interacts with HDAC1; this interaction is enhanced in the presence of PWWP2B. It depends on Zn(2+) as a cofactor.

Its subcellular location is the nucleus. It localises to the cytoplasm. The protein resides in the cytoskeleton. The protein localises to the spindle pole. In terms of biological role, metalloprotease that specifically cleaves 'Lys-63'-linked polyubiquitin chains. Does not have activity toward 'Lys-48'-linked polyubiquitin chains. Component of the BRCA1-A complex, a complex that specifically recognizes 'Lys-63'-linked ubiquitinated histones H2A and H2AX at DNA lesions sites, leading to target the BRCA1-BARD1 heterodimer to sites of DNA damage at double-strand breaks (DSBs). In the BRCA1-A complex, it specifically removes 'Lys-63'-linked ubiquitin on histones H2A and H2AX, antagonizing the RNF8-dependent ubiquitination at double-strand breaks (DSBs). Catalytic subunit of the BRISC complex, a multiprotein complex that specifically cleaves 'Lys-63'-linked ubiquitin in various substrates. Mediates the specific 'Lys-63'-specific deubiquitination associated with the COP9 signalosome complex (CSN), via the interaction of the BRISC complex with the CSN complex. The BRISC complex is required for normal mitotic spindle assembly and microtubule attachment to kinetochores via its role in deubiquitinating NUMA1. Plays a role in interferon signaling via its role in the deubiquitination of the interferon receptor IFNAR1; deubiquitination increases IFNAR1 activity by enhancing its stability and cell surface expression. Acts as a regulator of the NLRP3 inflammasome by mediating deubiquitination of NLRP3, leading to NLRP3 inflammasome assembly. Down-regulates the response to bacterial lipopolysaccharide (LPS) via its role in IFNAR1 deubiquitination. Deubiquitinates HDAC1 and PWWP2B leading to their stabilization. The polypeptide is Lys-63-specific deubiquitinase BRCC36 (BRCC3) (Bos taurus (Bovine)).